Here is a 182-residue protein sequence, read N- to C-terminus: UPF0397 protein BCAH820_2657 (182 aa).

5 helical membrane passes run 9–29 (VVAIGIGSALYGILGLWGFTI), 40–60 (AILTVFGALFGPVAGLLIGLI), 71–91 (WGIWWGWVISSGIIGFTMGFI), 114–134 (ITGLIGIVIAIIFAGAFDIIV), and 142–162 (IVIQVLGATIADVIVFLVLGL).

Belongs to the UPF0397 family.

Its subcellular location is the cell membrane. This chain is UPF0397 protein BCAH820_2657, found in Bacillus cereus (strain AH820).